Here is a 471-residue protein sequence, read N- to C-terminus: Ribulose bisphosphate carboxylase large chain 2 (471 aa).

Residues asparagine 116 and threonine 166 each coordinate substrate. The Proton acceptor role is filled by lysine 168. A substrate-binding site is contributed by lysine 170. Mg(2+) contacts are provided by lysine 194, aspartate 196, and glutamate 197. N6-carboxylysine is present on lysine 194. Histidine 287 acts as the Proton acceptor in catalysis. Substrate-binding residues include arginine 288, histidine 320, and serine 372.

This sequence belongs to the RuBisCO large chain family. Type I subfamily. Heterohexadecamer of 8 large chains and 8 small chains; disulfide-linked. The disulfide link is formed within the large subunit homodimers. It depends on Mg(2+) as a cofactor. In terms of processing, the disulfide bond which can form in the large chain dimeric partners within the hexadecamer appears to be associated with oxidative stress and protein turnover.

It carries out the reaction 2 (2R)-3-phosphoglycerate + 2 H(+) = D-ribulose 1,5-bisphosphate + CO2 + H2O. The enzyme catalyses D-ribulose 1,5-bisphosphate + O2 = 2-phosphoglycolate + (2R)-3-phosphoglycerate + 2 H(+). Functionally, ruBisCO catalyzes two reactions: the carboxylation of D-ribulose 1,5-bisphosphate, the primary event in carbon dioxide fixation, as well as the oxidative fragmentation of the pentose substrate. Both reactions occur simultaneously and in competition at the same active site. This chain is Ribulose bisphosphate carboxylase large chain 2, found in Allochromatium vinosum (strain ATCC 17899 / DSM 180 / NBRC 103801 / NCIMB 10441 / D) (Chromatium vinosum).